The primary structure comprises 352 residues: MMAHELPLSIHTKKSNHNVPPSKAPSAKTNKHKPSKSGSDDRGLPNGGKVDFGNKSGSQTNKKSNKKTSKHTSSNTSNNKGVTRVLPDGSKPNFGNESSHQNGGNHKKQNNEPCLPNGEKPNFGEGSKSHSKKKNNDHVLPNGEKPNFFNEKSSKKATKPKEKKPLITEDTYAGSSFHSSPAALNLPKPSFKTSPKTNDAKQHTTEPNYHVNPQVNTPPQHSVNVPPQHPVTTYPAGNGVPNIPTVPSNPTAFPPRNHYAQPGFSYYATPQGYINYQYPQVPPPPPPQGGVYPMVAPQYQQQPQQHPQQHPQPQPQPQQLPQQHRPHHLPAIAAPQQGHRISFNELLGSSKS.

2 disordered regions span residues 1 to 258 (MMAH…PRNH) and 277 to 352 (QYPQ…SSKS). Low complexity predominate over residues 71 to 80 (HTSSNTSNNK). 2 stretches are compositionally biased toward polar residues: residues 93–104 (NFGNESSHQNGG) and 205–225 (TEPNYHVNPQVNTPPQHSVNV). A compositionally biased stretch (low complexity) spans 289 to 309 (GGVYPMVAPQYQQQPQQHPQQ).

Belongs to the EDC family.

Its subcellular location is the cytoplasm. Its function is as follows. mRNA-binding protein which stimulates mRNA decapping. The sequence is that of Enhancer of mRNA-decapping protein 1 (EDC1) from Debaryomyces hansenii (strain ATCC 36239 / CBS 767 / BCRC 21394 / JCM 1990 / NBRC 0083 / IGC 2968) (Yeast).